A 377-amino-acid polypeptide reads, in one-letter code: GDP-mannose 3,5-epimerase (377 aa).

The residue at position 2 (G2) is an N-acetylglycine. NAD(+) contacts are provided by residues 34-60, D58, and D78; that span reads GAGG…SDWK. Residues G103 and 143 to 145 each bind substrate; that span reads SAC. NAD(+) is bound by residues Y174 and K178. The active-site Proton acceptor is Y174. Substrate contacts are provided by residues N203, 216–218, K225, 241–243, R306, and S356; these read EKA and QTR. S369 bears the Phosphoserine mark.

This sequence belongs to the NAD(P)-dependent epimerase/dehydratase family. As to quaternary structure, homodimer. Interacts with chaperone Hsc70-3 protein, which may regulate epimerase activity. NAD(+) is required as a cofactor.

It carries out the reaction GDP-alpha-D-mannose = GDP-beta-L-gulose. The catalysed reaction is GDP-beta-L-gulose = GDP-beta-L-galactose. Its pathway is cofactor biosynthesis; L-ascorbate biosynthesis via GDP-alpha-D-mannose pathway; L-ascorbate from GDP-alpha-D-mannose: step 1/5. With respect to regulation, inhibited by GDP and GDP-D-glucose. Its function is as follows. Catalyzes a reversible epimerization of GDP-D-mannose that precedes the committed step in the biosynthesis of vitamin C (L-ascorbate), resulting in the hydrolysis of the highly energetic glycosyl-pyrophosphoryl linkage. Able to catalyze 2 distinct epimerization reactions and can release both GDP-L-galactose and GDP-L-gulose from GDP-mannose. The sequence is that of GDP-mannose 3,5-epimerase from Arabidopsis thaliana (Mouse-ear cress).